Consider the following 466-residue polypeptide: UDP-glycosyltransferase 91B1 (466 aa).

Residues threonine 286, 342 to 344, 359 to 367, and 381 to 384 contribute to the UDP-alpha-D-glucose site; these read VPQ, HCGWGSAVE, and NLDQ.

Belongs to the UDP-glycosyltransferase family.

The sequence is that of UDP-glycosyltransferase 91B1 (UGT91B1) from Arabidopsis thaliana (Mouse-ear cress).